The chain runs to 543 residues: Zinc finger CCCH-type with G patch domain-containing protein (543 aa).

2 disordered regions span residues 55–79 (AATS…DNPI) and 95–132 (TEDS…DKLD). Over residues 65 to 76 (DTAGRAPPATAD) the composition is skewed to low complexity. Residues 118 to 131 (DDDADNDDDADDKL) are compositionally biased toward acidic residues. A C3H1-type zinc finger spans residues 186 to 209 (PCAYFLEGECRFTDEKCRYSHGEV). The disordered stretch occupies residues 272–304 (PFEDLLPLDEDEDGQEAAEDSESDTDGADEEEA). The segment covering 277 to 304 (LPLDEDEDGQEAAEDSESDTDGADEEEA) has biased composition (acidic residues). The 47-residue stretch at 335 to 381 (TRGIGSKIMQKMGYIVGTGLGREGEGIVVPVSAQVLPQGRSLDYCME) folds into the G-patch domain. Residues 438–460 (GAAGGESSRPNRNRPGALSRQEL) are disordered.

The protein localises to the nucleus. Transcription repressor. This is Zinc finger CCCH-type with G patch domain-containing protein from Anopheles gambiae (African malaria mosquito).